The chain runs to 398 residues: Putative FBD-associated F-box protein At5g56700 (398 aa).

The 47-residue stretch at 1 to 47 (MAKISDLSDELLVKILSFLPTKEAVSTSCLSKQWEFLWMWLSKLEFY) folds into the F-box domain. The region spanning 340–388 (WKNNKSSVPKCLLESLETFEFAGYIGTPEERDFLSYIFKHARCLKSSSI) is the FBD domain.

In Arabidopsis thaliana (Mouse-ear cress), this protein is Putative FBD-associated F-box protein At5g56700.